Consider the following 182-residue polypeptide: Peptidoglycan-recognition protein SB2 (182 aa).

The first 17 residues, 1–17 (MKLQLALVLCGLTLALG), serve as a signal peptide directing secretion. The region spanning 40–165 (PVRLIIIHHT…CQTKATACPG (126 aa)) is the N-acetylmuramoyl-L-alanine amidase domain. H47 provides a ligand contact to Zn(2+). C54 and C60 are disulfide-bonded. An N-linked (GlcNAc...) asparagine glycan is attached at N149. Zn(2+) is bound by residues H155 and C163.

It belongs to the N-acetylmuramoyl-L-alanine amidase 2 family. It depends on Zn(2+) as a cofactor.

It localises to the secreted. The enzyme catalyses Hydrolyzes the link between N-acetylmuramoyl residues and L-amino acid residues in certain cell-wall glycopeptides.. N-acetylmuramyl-L-alanine amidase involved in innate immunity by degrading bacterial peptidoglycans (PGN). Probably plays a scavenger role by digesting biologically active PGN into biologically inactive fragments. Has no direct bacteriolytic activity. This Drosophila simulans (Fruit fly) protein is Peptidoglycan-recognition protein SB2 (PGRP-SB2).